The primary structure comprises 79 residues: Endothelin-2 (79 aa).

Residues 1–23 (PEQTAPYGLGNPPRRRRRSLPRR) form a disordered region. The tract at residues 24 to 39 (CQCSSARDPSCATFCL) is endothelin-like. Residues 51-79 (SRKSPADVFQTGKTGATRGELLQRLRDIS) form a disordered region.

The protein belongs to the endothelin/sarafotoxin family.

Its subcellular location is the secreted. Endothelins are endothelium-derived vasoconstrictor peptides. The polypeptide is Endothelin-2 (EDN2) (Macaca fascicularis (Crab-eating macaque)).